Reading from the N-terminus, the 469-residue chain is Argininosuccinate lyase (469 aa).

The protein belongs to the lyase 1 family. Argininosuccinate lyase subfamily.

It is found in the cytoplasm. The enzyme catalyses 2-(N(omega)-L-arginino)succinate = fumarate + L-arginine. It functions in the pathway amino-acid biosynthesis; L-arginine biosynthesis; L-arginine from L-ornithine and carbamoyl phosphate: step 3/3. In Burkholderia thailandensis (strain ATCC 700388 / DSM 13276 / CCUG 48851 / CIP 106301 / E264), this protein is Argininosuccinate lyase.